The chain runs to 581 residues: Leucine aminopeptidase 3, chloroplastic (581 aa).

The transit peptide at 1–50 (MAVTLVTSCASSSRFHFRSFSSSPSSLSSCFVRFQLLSRLRVSFAITPLY) directs the protein to the chloroplast. 2 residues coordinate Mn(2+): K350 and D355. K362 is an active-site residue. Positions 375, 435, and 437 each coordinate Mn(2+). R439 is a catalytic residue.

This sequence belongs to the peptidase M17 family. Homohexamer (dimer of homotrimers). Mn(2+) serves as cofactor.

It is found in the plastid. It localises to the chloroplast. It catalyses the reaction Release of an N-terminal amino acid, Xaa-|-Yaa-, in which Xaa is preferably Leu, but may be other amino acids including Pro although not Arg or Lys, and Yaa may be Pro. Amino acid amides and methyl esters are also readily hydrolyzed, but rates on arylamides are exceedingly low.. The enzyme catalyses Release of N-terminal proline from a peptide.. Its function is as follows. Presumably involved in the processing and regular turnover of intracellular proteins. Catalyzes the removal of unsubstituted N-terminal amino acids from various peptides. Possesses Cys-Gly dipeptidase activity. This chain is Leucine aminopeptidase 3, chloroplastic, found in Arabidopsis thaliana (Mouse-ear cress).